The following is a 541-amino-acid chain: Tyrosine-protein kinase Yes (541 aa).

Positions 1–10 (MGCIKSKENK) are enriched in basic and acidic residues. The tract at residues 1–29 (MGCIKSKENKSPAIKYTPENPTEPVNTSA) is disordered. A lipid anchor (N-myristoyl glycine) is attached at Gly2. Residue Cys3 is the site of S-palmitoyl cysteine; in membrane form attachment. The segment covering 19-29 (ENPTEPVNTSA) has biased composition (polar residues). Position 32 is a phosphotyrosine (Tyr32). The SH3 domain maps to 89–150 (GGVTIFVALY…PSNYVAPADS (62 aa)). Residues 156–253 (WYFGKMGRKD…GLCHKLTTVC (98 aa)) form the SH2 domain. The region spanning 275 to 528 (LRLEVKLGQG…YIQSFLEDYF (254 aa)) is the Protein kinase domain. ATP-binding positions include 281–289 (LGQGCFGEV) and Lys303. Phosphotyrosine occurs at positions 334 and 343. The active-site Proton acceptor is the Asp394. Residue Tyr424 is modified to Phosphotyrosine; by autocatalysis. A Phosphotyrosine modification is found at Tyr535.

In terms of assembly, interacts with YAP1 and CSF1R. Interacts with FASLG. Interacts with CTNND1; this interaction allows YES1-mediated activation of FYN and FER and subsequent phosphorylation of CTNND1. Interacts with IL6ST/gp130. Interacts with SCRIB, when YES1 is in a closed conformation; the interaction facilitates YES1 autophosphorylation. In terms of processing, phosphorylated. Phosphorylation by CSK on the C-terminal tail maintains the enzyme in an inactive state. Autophosphorylation at Tyr-424 maintains enzyme activity by blocking CSK-mediated inhibition. Post-translationally, palmitoylation at Cys-3 promotes membrane localization.

It is found in the cell membrane. Its subcellular location is the cytoplasm. It localises to the cytoskeleton. The protein localises to the microtubule organizing center. The protein resides in the centrosome. It is found in the cytosol. Its subcellular location is the cell junction. The catalysed reaction is L-tyrosyl-[protein] + ATP = O-phospho-L-tyrosyl-[protein] + ADP + H(+). Non-receptor protein tyrosine kinase that is involved in the regulation of cell growth and survival, apoptosis, cell-cell adhesion, cytoskeleton remodeling, and differentiation. Stimulation by receptor tyrosine kinases (RTKs) including EGFR, PDGFR, CSF1R and FGFR leads to recruitment of YES1 to the phosphorylated receptor, and activation and phosphorylation of downstream substrates. Upon EGFR activation, promotes the phosphorylation of PARD3 to favor epithelial tight junction assembly. Participates in the phosphorylation of specific junctional components such as CTNND1 by stimulating the FYN and FER tyrosine kinases at cell-cell contacts. Upon T-cell stimulation by CXCL12, phosphorylates collapsin response mediator protein 2/DPYSL2 and induces T-cell migration. Participates in CD95L/FASLG signaling pathway and mediates AKT-mediated cell migration. Plays a role in cell cycle progression by phosphorylating the cyclin dependent kinase 4/CDK4 thus regulating the G1 phase. Also involved in G2/M progression and cytokinesis. Catalyzes phosphorylation of organic cation transporter OCT2 which induces its transport activity. This is Tyrosine-protein kinase Yes (Yes1) from Rattus norvegicus (Rat).